Consider the following 309-residue polypeptide: Protein FdhE (309 aa).

The protein belongs to the FdhE family.

It is found in the cytoplasm. In terms of biological role, necessary for formate dehydrogenase activity. The polypeptide is Protein FdhE (Shigella boydii serotype 18 (strain CDC 3083-94 / BS512)).